The primary structure comprises 287 residues: Cbb3-type cytochrome c oxidase subunit FixP (287 aa).

Over 1–33 (MSQKHIDELSGVETTGHEWDGIQELNNPMPRWW) the chain is Cytoplasmic. A helical membrane pass occupies residues 34–54 (IWTFYVTILWAIGYAIAYPAI). Over 55–287 (PMITSATNGY…IFVHALGGGT (233 aa)) the chain is Periplasmic. Cytochrome c domains lie at 108–196 (FAIA…WGLT) and 203–284 (GLAA…HALG). Positions 121, 124, 125, 173, 216, 219, 220, and 261 each coordinate heme c.

It belongs to the CcoP / FixP family. Component of the cbb3-type cytochrome c oxidase at least composed of FixN, FixO, FixQ and FixP. Heme c is required as a cofactor.

Its subcellular location is the cell inner membrane. It participates in energy metabolism; oxidative phosphorylation. Its function is as follows. C-type cytochrome. Part of the cbb3-type cytochrome c oxidase complex. FixP subunit is required for transferring electrons from donor cytochrome c via its heme groups to FixO subunit. From there, electrons are shuttled to the catalytic binuclear center of FixN subunit where oxygen reduction takes place. The complex also functions as a proton pump. This chain is Cbb3-type cytochrome c oxidase subunit FixP, found in Rhizobium etli (strain ATCC 51251 / DSM 11541 / JCM 21823 / NBRC 15573 / CFN 42).